Reading from the N-terminus, the 584-residue chain is Insulin-like growth factor 2 mRNA-binding protein 3 (584 aa).

2 RRM domains span residues 2–75 (NKLY…HSVP) and 81–156 (RKLQ…YIPD). The tract at residues 160-199 (AQQPPQQHPQGRRGFGQRGPPRQGSPSATTRQKPQSDVPL) is disordered. Residues 184–194 (SPSATTRQKPQ) show a composition bias toward polar residues. 4 consecutive KH domains span residues 196–261 (DVPL…CKII), 277–344 (EIPL…EEEI), 409–474 (SETV…QGRI), and 491–557 (KLEA…QRKI).

Belongs to the RRM IMP/VICKZ family. In terms of assembly, homodimer and multimer.

It localises to the cytoplasm. Its subcellular location is the nucleus. It is found in the P-body. The protein localises to the stress granule. In terms of biological role, RNA-binding factor that may recruit target transcripts to cytoplasmic protein-RNA complexes (mRNPs). This transcript 'caging' into mRNPs allows mRNA transport and transient storage. It also modulates the rate and location at which target transcripts encounter the translational apparatus and shields them from endonuclease attacks or microRNA-mediated degradation. Preferentially binds to N6-methyladenosine (m6A)-containing mRNAs and increases their stability. The chain is Insulin-like growth factor 2 mRNA-binding protein 3 (IGF2BP3) from Gallus gallus (Chicken).